The following is a 68-amino-acid chain: Protein DsrB (68 aa).

The protein belongs to the DsrB family.

The polypeptide is Protein DsrB (Sodalis glossinidius (strain morsitans)).